A 254-amino-acid chain; its full sequence is Phosphoglycerate mutase 1 (254 aa).

Substrate contacts are provided by residues Arg-10–Asn-17 and Ser-23–Gly-24. The Tele-phosphohistidine intermediate role is filled by His-11. 2 positions are modified to phosphoserine: Ser-14 and Ser-23. Tyr-26 carries the phosphotyrosine modification. Phosphoserine is present on Ser-31. Substrate is bound by residues Arg-62, Glu-89–Tyr-92, and Lys-100. Glu-89 functions as the Proton donor/acceptor in the catalytic mechanism. N6-acetyllysine is present on Lys-106. Arg-116–Arg-117 contributes to the substrate binding site. At Ser-118 the chain carries Phosphoserine. Gly-187–Asn-188 contacts substrate. Residue Lys-251 is modified to N6-acetyllysine; alternate. N6-succinyllysine; alternate is present on Lys-251. N6-acetyllysine is present on residues Lys-253 and Lys-254.

This sequence belongs to the phosphoglycerate mutase family. BPG-dependent PGAM subfamily. As to quaternary structure, homodimer. Acetylated at Lys-253, Lys-253 and Lys-254 under high glucose condition. Acetylation increases catalytic activity. Under glucose restriction SIRT1 levels dramatically increase and it deacetylates the enzyme.

The catalysed reaction is (2R)-2-phosphoglycerate = (2R)-3-phosphoglycerate. The enzyme catalyses (2R)-3-phospho-glyceroyl phosphate = (2R)-2,3-bisphosphoglycerate + H(+). Functionally, catalyzes the interconversion of 2-phosphoglycerate and 3-phosphoglyceratea crucial step in glycolysis, by using 2,3-bisphosphoglycerate. Also catalyzes the interconversion of (2R)-2,3-bisphosphoglycerate and (2R)-3-phospho-glyceroyl phosphate. This chain is Phosphoglycerate mutase 1, found in Bos taurus (Bovine).